The chain runs to 462 residues: Malonyl-coenzyme:anthocyanin 5-O-glucoside-6'''-O-malonyltransferase (462 aa).

Catalysis depends on proton acceptor residues His167 and Asp390.

This sequence belongs to the plant acyltransferase family. As to expression, detected in petals and sepals, and at lower levels in bracts and red stems.

It carries out the reaction pelargonidin 3-O-(6-O-[(E)-caffeoyl]-beta-D-glucoside) 5-O-beta-D-glucoside + malonyl-CoA = 4'''-demalonylsalvianin + CoA. Its pathway is pigment biosynthesis; anthocyanin biosynthesis. With respect to regulation, completely inhibited by 10 mM p-coumaric acid, this inhibition is rapid, reversible and non-competitive. Completely inhibited by 0.1 mM Cu(2+), 0.1 mM Hg(2+) and 10 mM caffeic acid. Partially inhibited by 5 mM N-ethylmaleimide, 1 mM diethylpyrocarbonate and 1 mM acetyl-CoA. Its function is as follows. Catalyzes the transfer of a malonyl group from malonyl-CoA to the 6'''-hydroxyl group of the 5-glucosyl moiety of anthocyanins. Active towards bisdemalonylsalvianin (pelargonidin 3-O-(6-caffeoyl-beta-D-glucoside) 5-O-beta-D-glucoside) and shisonin, but not towards nodemalonylsalvianin, salvianin, pelargonidin 3,5-diglucoside and delphinidin 3,5-diglucoside. The chain is Malonyl-coenzyme:anthocyanin 5-O-glucoside-6'''-O-malonyltransferase from Salvia splendens (Scarlet sage).